Here is a 147-residue protein sequence, read N- to C-terminus: Large ribosomal subunit protein uL11 (147 aa).

Belongs to the universal ribosomal protein uL11 family. Part of the ribosomal stalk of the 50S ribosomal subunit. Interacts with L10 and the large rRNA to form the base of the stalk. L10 forms an elongated spine to which L12 dimers bind in a sequential fashion forming a multimeric L10(L12)X complex. One or more lysine residues are methylated.

Its function is as follows. Forms part of the ribosomal stalk which helps the ribosome interact with GTP-bound translation factors. The chain is Large ribosomal subunit protein uL11 from Bacteroides thetaiotaomicron (strain ATCC 29148 / DSM 2079 / JCM 5827 / CCUG 10774 / NCTC 10582 / VPI-5482 / E50).